Consider the following 111-residue polypeptide: Protein IDA-LIKE 5 (111 aa).

The N-terminal stretch at 1-27 (MGNKRIKAMMILVVMIMMVFSWRICEA) is a signal peptide. A compositionally biased stretch (basic residues) spans 46 to 56 (RRPNPRNHHHQ). Residues 46-65 (RRPNPRNHHHQNQGFNGDDY) form a disordered region.

Expressed mainly in flowers. Lower levels in buds and seedlings. Detected in vascular tissues and in hydathodes.

It is found in the secreted. The protein resides in the extracellular space. In terms of biological role, may be involved in floral abscission. This Arabidopsis thaliana (Mouse-ear cress) protein is Protein IDA-LIKE 5 (IDL5).